The following is a 378-amino-acid chain: Spermidine/putrescine import ATP-binding protein PotA (378 aa).

The ABC transporter domain maps to 18-248 (VQLAGIRKCF…PKNLFVTGFI (231 aa)). An ATP-binding site is contributed by 50-57 (GPSGCGKT).

The protein belongs to the ABC transporter superfamily. Spermidine/putrescine importer (TC 3.A.1.11.1) family. In terms of assembly, the complex is composed of two ATP-binding proteins (PotA), two transmembrane proteins (PotB and PotC) and a solute-binding protein (PotD).

It localises to the cell inner membrane. It catalyses the reaction ATP + H2O + polyamine-[polyamine-binding protein]Side 1 = ADP + phosphate + polyamineSide 2 + [polyamine-binding protein]Side 1.. Functionally, part of the ABC transporter complex PotABCD involved in spermidine/putrescine import. Responsible for energy coupling to the transport system. The polypeptide is Spermidine/putrescine import ATP-binding protein PotA (Shigella flexneri serotype 5b (strain 8401)).